The following is a 428-amino-acid chain: Glutamate-1-semialdehyde 2,1-aminomutase (428 aa).

N6-(pyridoxal phosphate)lysine is present on Lys267.

It belongs to the class-III pyridoxal-phosphate-dependent aminotransferase family. HemL subfamily. Homodimer. Requires pyridoxal 5'-phosphate as cofactor.

Its subcellular location is the cytoplasm. The catalysed reaction is (S)-4-amino-5-oxopentanoate = 5-aminolevulinate. The protein operates within porphyrin-containing compound metabolism; protoporphyrin-IX biosynthesis; 5-aminolevulinate from L-glutamyl-tRNA(Glu): step 2/2. This chain is Glutamate-1-semialdehyde 2,1-aminomutase, found in Persephonella marina (strain DSM 14350 / EX-H1).